A 400-amino-acid chain; its full sequence is Centrosomal protein CEP57L1 (400 aa).

A Phosphoserine modification is found at S45. Coiled-coil stretches lie at residues 47 to 111 (NNQA…KKDI) and 138 to 213 (NVER…QDRA). Disordered regions lie at residues 222-261 (REPP…EPVS) and 314-400 (MESK…KWEQ). Residues 244–258 (RTTSQARANPQSSGE) are compositionally biased toward polar residues. Residues 261–345 (SICDSLSELL…EKIENSRINE (85 aa)) are a coiled coil. Basic and acidic residues-rich tracts occupy residues 314–342 (MESK…ENSR) and 391–400 (LRRDDIKWEQ).

This sequence belongs to the translokin family.

It is found in the cytoplasm. Its subcellular location is the cytoskeleton. It localises to the microtubule organizing center. The protein localises to the centrosome. Its function is as follows. Centrosomal protein which may be required for microtubule attachment to centrosomes. This is Centrosomal protein CEP57L1 (Cep57l1) from Mus musculus (Mouse).